A 68-amino-acid polypeptide reads, in one-letter code: DNA-directed RNA polymerase subunit omega (68 aa).

This sequence belongs to the RNA polymerase subunit omega family. The RNAP catalytic core consists of 2 alpha, 1 beta, 1 beta' and 1 omega subunit. When a sigma factor is associated with the core the holoenzyme is formed, which can initiate transcription.

The enzyme catalyses RNA(n) + a ribonucleoside 5'-triphosphate = RNA(n+1) + diphosphate. Promotes RNA polymerase assembly. Latches the N- and C-terminal regions of the beta' subunit thereby facilitating its interaction with the beta and alpha subunits. The sequence is that of DNA-directed RNA polymerase subunit omega from Sulfurovum sp. (strain NBC37-1).